The primary structure comprises 354 residues: MSAGGGRAFAWQVFPPMPTCRVYGTVAHQDEHLLVLGGCGRAGLPLDTAETLDMASHTWLALAPLPTARAGAAAVVLGKQVLVVGGVDEVQSPVAAVEAFLMDEGRWERRATLPQAAMGVATVERDGMVYALGGMGPDTAPQAQVRVYEPRRDCWLSLPSMPTPCYGASTFLHGNKIYVLGGRQGKLPVTAFEAFDLEARTWTRHPSLPSRRAFAGCAMAEGSVFSLGGLQQPGPHNFYSRPHFVNTVEMFDLEHGSWTKLPRSLRMRDKRADFVVGSLGGHIVAIGGLGNQPCPLGSVESFSLARRRWEALPAMPTARCSCSSLQAGPRLFVIGGVAQGPSQAVEALCLRDGV.

Kelch repeat units lie at residues 1 to 31 (MSAG…HQDE), 32 to 79 (HLLV…VLGK), 81 to 127 (VLVV…ERDG), 128 to 175 (MVYA…LHGN), 176 to 222 (KIYV…MAEG), 224 to 281 (VFSL…SLGG), 282 to 329 (HIVA…QAGP), and 331 to 354 (LFVI…RDGV).

It is found in the cytoplasm. Its subcellular location is the midbody. Its function is as follows. Involved in pinching off the separated nuclei at the cleavage furrow and in cytokinesis. Required for mitotic integrity and maintenance of chromosomal stability. Protects cells against mitotic errors, centrosomal amplification, micronucleus formation and aneuploidy. Plays a key role of midbody function involving abscission of the daughter cells during cytokinesis and appropriate chromosomal and nuclear segregation into the daughter cells. The chain is Kelch domain-containing protein 8B (KLHDC8B) from Pongo abelii (Sumatran orangutan).